The primary structure comprises 695 residues: UvrABC system protein B (695 aa).

Positions 45–434 constitute a Helicase ATP-binding domain; the sequence is EGIEDGLSFQ…QVVEQVVRPT (390 aa). ATP is bound at residue 58 to 65; sequence GVTGSGKT. The Beta-hairpin signature appears at 111–134; sequence YYDYYQPEAYVPQRDLFIEKDSSI. In terms of domain architecture, Helicase C-terminal spans 449–602; the sequence is QVDDLLSEIN…QMAFNEANGI (154 aa). The region spanning 646 to 681 is the UVR domain; the sequence is SKEIKRLEKLMMDHAKNLEFEKAAQVRDQLAKLKAQ.

Belongs to the UvrB family. As to quaternary structure, forms a heterotetramer with UvrA during the search for lesions. Interacts with UvrC in an incision complex.

It is found in the cytoplasm. Functionally, the UvrABC repair system catalyzes the recognition and processing of DNA lesions. A damage recognition complex composed of 2 UvrA and 2 UvrB subunits scans DNA for abnormalities. Upon binding of the UvrA(2)B(2) complex to a putative damaged site, the DNA wraps around one UvrB monomer. DNA wrap is dependent on ATP binding by UvrB and probably causes local melting of the DNA helix, facilitating insertion of UvrB beta-hairpin between the DNA strands. Then UvrB probes one DNA strand for the presence of a lesion. If a lesion is found the UvrA subunits dissociate and the UvrB-DNA preincision complex is formed. This complex is subsequently bound by UvrC and the second UvrB is released. If no lesion is found, the DNA wraps around the other UvrB subunit that will check the other stand for damage. The protein is UvrABC system protein B of Cupriavidus pinatubonensis (strain JMP 134 / LMG 1197) (Cupriavidus necator (strain JMP 134)).